A 297-amino-acid polypeptide reads, in one-letter code: Undecaprenyl-diphosphatase (297 aa).

7 consecutive transmembrane segments (helical) span residues 58–78, 103–123, 138–158, 168–188, 208–228, 243–263, and 274–294; these read PGVAFTAVIQLGSIVAVLSYF, AQMGLGILFGTIPILIGGLLI, LAAIAIVSIVMGLLLGIAEQL, LRLADGLWMGFAQALALIPGV, AARFSFLLGIPAITIAGLVEL, VLAIGTLSSLIFSWLAIAWLL, and FVVYRIIFGGVILTAIATGTL.

It belongs to the UppP family.

The protein localises to the cell inner membrane. It catalyses the reaction di-trans,octa-cis-undecaprenyl diphosphate + H2O = di-trans,octa-cis-undecaprenyl phosphate + phosphate + H(+). In terms of biological role, catalyzes the dephosphorylation of undecaprenyl diphosphate (UPP). Confers resistance to bacitracin. In Synechococcus sp. (strain ATCC 27144 / PCC 6301 / SAUG 1402/1) (Anacystis nidulans), this protein is Undecaprenyl-diphosphatase.